The primary structure comprises 245 residues: 5-oxoprolinase subunit A (245 aa).

The protein belongs to the LamB/PxpA family. As to quaternary structure, forms a complex composed of PxpA, PxpB and PxpC.

It carries out the reaction 5-oxo-L-proline + ATP + 2 H2O = L-glutamate + ADP + phosphate + H(+). Its function is as follows. Catalyzes the cleavage of 5-oxoproline to form L-glutamate coupled to the hydrolysis of ATP to ADP and inorganic phosphate. This Yersinia enterocolitica serotype O:8 / biotype 1B (strain NCTC 13174 / 8081) protein is 5-oxoprolinase subunit A.